The primary structure comprises 89 residues: Large ribosomal subunit protein bL27 (89 aa).

Positions 1 to 21 (MAHKKAGGSSRNGRDSKGKRL) are disordered.

It belongs to the bacterial ribosomal protein bL27 family.

The protein is Large ribosomal subunit protein bL27 of Bradyrhizobium diazoefficiens (strain JCM 10833 / BCRC 13528 / IAM 13628 / NBRC 14792 / USDA 110).